The chain runs to 529 residues: Listeriolysin O (529 aa).

Residues 1 to 24 (MKKIMLVFITLILISLPIAQQTEA) form the signal peptide. Residues 35–54 (SISSMAPPASPPASPKTPIE) are disordered. 4 consecutive transmembrane segments (beta stranded) span residues 214 to 227 (ESQLIAKFGTAFKA), 234 to 243 (VNFGAISEGK), 312 to 321 (STKVKAAFDA), and 329 to 341 (SGDVELTNIIKNS). Positions 483 to 493 (ECTGLAWEWWR) match the Conserved undecapeptide motif. The Cholesterol binding motif lies at 515–516 (TL).

It belongs to the cholesterol-dependent cytolysin family. In terms of assembly, homooligomeric pore complex of 35 to 50 subunits; when inserted in the host membrane.

It is found in the secreted. The protein localises to the host membrane. The protein resides in the host cell membrane. Its activity is regulated as follows. Activity of listeriolysin O is regulated on multiple levels. It should be high in the phagosome, thereby allowing escape of the bacteria from the phagosomal compartment. Then, once inside the host cytosol, the activity must be controlled to prevent lysis of the host plasma membrane and loss of the intracellular environment. Its function is as follows. A cholesterol-dependent toxin that causes cytolysis by forming pores in cholesterol containing host membranes. After binding to target membranes, the protein undergoes a major conformation change, leading to its insertion in the host membrane and formation of an oligomeric pore complex. Cholesterol is required for binding to host membranes, membrane insertion and pore formation; cholesterol binding is mediated by a Thr-Leu pair in the C-terminus. Acts as a major virulence factor required for the escape of bacteria from phagosomal vacuoles and entry into the host cytosol. Can be reversibly inactivated by oxidation. The polypeptide is Listeriolysin O (hly) (Listeria monocytogenes serotype 4a (strain HCC23)).